Reading from the N-terminus, the 112-residue chain is Putative pterin-4-alpha-carbinolamine dehydratase (112 aa).

Belongs to the pterin-4-alpha-carbinolamine dehydratase family.

It catalyses the reaction (4aS,6R)-4a-hydroxy-L-erythro-5,6,7,8-tetrahydrobiopterin = (6R)-L-erythro-6,7-dihydrobiopterin + H2O. The sequence is that of Putative pterin-4-alpha-carbinolamine dehydratase from Vibrio campbellii (strain ATCC BAA-1116).